The primary structure comprises 405 residues: Imidazolonepropionase (405 aa).

Fe(3+) contacts are provided by His-72 and His-74. Zn(2+) is bound by residues His-72 and His-74. The 4-imidazolone-5-propanoate site is built by Arg-81, Tyr-144, and His-177. Tyr-144 is an N-formimidoyl-L-glutamate binding site. Residue His-242 coordinates Fe(3+). Zn(2+) is bound at residue His-242. Position 245 (Gln-245) interacts with 4-imidazolone-5-propanoate. Asp-317 contacts Fe(3+). Asp-317 contacts Zn(2+). N-formimidoyl-L-glutamate contacts are provided by Asn-319 and Gly-321. Thr-322 contacts 4-imidazolone-5-propanoate.

The protein belongs to the metallo-dependent hydrolases superfamily. HutI family. Requires Zn(2+) as cofactor. Fe(3+) is required as a cofactor.

It is found in the cytoplasm. The catalysed reaction is 4-imidazolone-5-propanoate + H2O = N-formimidoyl-L-glutamate. The protein operates within amino-acid degradation; L-histidine degradation into L-glutamate; N-formimidoyl-L-glutamate from L-histidine: step 3/3. In terms of biological role, catalyzes the hydrolytic cleavage of the carbon-nitrogen bond in imidazolone-5-propanoate to yield N-formimidoyl-L-glutamate. It is the third step in the universal histidine degradation pathway. This Erwinia tasmaniensis (strain DSM 17950 / CFBP 7177 / CIP 109463 / NCPPB 4357 / Et1/99) protein is Imidazolonepropionase.